The primary structure comprises 251 residues: MREIEISRAIVEAYFNDLLQNLQLDIAIVGAGPSGMVAGYYLAKGGAKVAIFEKKLSVGGGIWGGAMGFNRVVVQESAREILDEFGVDYSQVGNGLYVLDSIELASTLASKAVKAGAKIFNMVEVEDLVVKDGRVSGLVINWTPVMMTGLHVDPLTVEAKFVVDSTGHGAQISQHLLKRGLIKAIPGEGPMWAEKGEELTVEHTREVFPGLYATGMAANALAGAPRMGPIFGGMLLSGRKAALEILQKLGK.

Residues Ser34, Glu53–Lys54, Gly61, Val125, and His151–Asp153 contribute to the NAD(+) site. Fe cation-binding residues include Asp153 and His168. An NAD(+)-binding site is contributed by Met216. Arg226 contacts glycine.

This sequence belongs to the THI4 family. As to quaternary structure, homooctamer; tetramer of dimers. The cofactor is Fe(2+).

It catalyses the reaction hydrogen sulfide + glycine + NAD(+) = ADP-5-ethyl-4-methylthiazole-2-carboxylate + nicotinamide + 3 H2O + H(+). The protein operates within cofactor biosynthesis; thiamine diphosphate biosynthesis. Functionally, involved in the biosynthesis of the thiazole moiety of thiamine. Catalyzes the conversion of NAD and glycine to adenosine diphosphate 5-(2-hydroxyethyl)-4-methylthiazole-2-carboxylate (ADT), an adenylated thiazole intermediate, using free sulfide as a source of sulfur. The sequence is that of Thiamine thiazole synthase from Thermococcus kodakarensis (strain ATCC BAA-918 / JCM 12380 / KOD1) (Pyrococcus kodakaraensis (strain KOD1)).